The primary structure comprises 129 residues: Small ribosomal subunit protein uS12 (129 aa).

This sequence belongs to the universal ribosomal protein uS12 family. As to quaternary structure, part of the 30S ribosomal subunit. Contacts proteins S8 and S17. May interact with IF1 in the 30S initiation complex.

Functionally, with S4 and S5 plays an important role in translational accuracy. Its function is as follows. Interacts with and stabilizes bases of the 16S rRNA that are involved in tRNA selection in the A site and with the mRNA backbone. Located at the interface of the 30S and 50S subunits, it traverses the body of the 30S subunit contacting proteins on the other side and probably holding the rRNA structure together. The combined cluster of proteins S8, S12 and S17 appears to hold together the shoulder and platform of the 30S subunit. This is Small ribosomal subunit protein uS12 from Rickettsia typhi (strain ATCC VR-144 / Wilmington).